Consider the following 851-residue polypeptide: Alanine--tRNA ligase (851 aa).

The Zn(2+) site is built by His-554, His-558, Cys-656, and His-660.

The protein belongs to the class-II aminoacyl-tRNA synthetase family. Zn(2+) serves as cofactor.

Its subcellular location is the cytoplasm. The catalysed reaction is tRNA(Ala) + L-alanine + ATP = L-alanyl-tRNA(Ala) + AMP + diphosphate. Its function is as follows. Catalyzes the attachment of alanine to tRNA(Ala) in a two-step reaction: alanine is first activated by ATP to form Ala-AMP and then transferred to the acceptor end of tRNA(Ala). Also edits incorrectly charged Ser-tRNA(Ala) and Gly-tRNA(Ala) via its editing domain. The polypeptide is Alanine--tRNA ligase (Aliarcobacter butzleri (strain RM4018) (Arcobacter butzleri)).